Consider the following 174-residue polypeptide: NADH-quinone oxidoreductase subunit B 1 (174 aa).

Residues cysteine 53, cysteine 54, cysteine 118, and cysteine 148 each coordinate [4Fe-4S] cluster.

Belongs to the complex I 20 kDa subunit family. NDH-1 is composed of 14 different subunits. Subunits NuoB, C, D, E, F, and G constitute the peripheral sector of the complex. The cofactor is [4Fe-4S] cluster.

The protein resides in the cell inner membrane. It catalyses the reaction a quinone + NADH + 5 H(+)(in) = a quinol + NAD(+) + 4 H(+)(out). Functionally, NDH-1 shuttles electrons from NADH, via FMN and iron-sulfur (Fe-S) centers, to quinones in the respiratory chain. The immediate electron acceptor for the enzyme in this species is believed to be ubiquinone. Couples the redox reaction to proton translocation (for every two electrons transferred, four hydrogen ions are translocated across the cytoplasmic membrane), and thus conserves the redox energy in a proton gradient. This chain is NADH-quinone oxidoreductase subunit B 1, found in Cereibacter sphaeroides (strain KD131 / KCTC 12085) (Rhodobacter sphaeroides).